Consider the following 385-residue polypeptide: Pepsin A (385 aa).

An N-terminal signal peptide occupies residues 1–15 (MKWLLLLSLVVLSEC). Positions 16–59 (LVKVPLVRKKSLRQNLIKNGKLKDFLKTHKHNPASKYFPEAAAL) are cleaved as a propeptide — activation peptide. The 310-residue stretch at 73-382 (YFGTIGIGTP…DRANNKVGLA (310 aa)) folds into the Peptidase A1 domain. Asp-91 is an active-site residue. Cysteines 104 and 109 form a disulfide. At Ser-127 the chain carries Phosphoserine. A disulfide bridge links Cys-265 with Cys-269. Residue Asp-274 is part of the active site. A disulfide bridge links Cys-308 with Cys-341.

The protein belongs to the peptidase A1 family. In terms of processing, minor amounts of the active enzyme occur with 'Ala-58' at the amino end.

It is found in the secreted. The enzyme catalyses Preferential cleavage: hydrophobic, preferably aromatic, residues in P1 and P1' positions. Cleaves 1-Phe-|-Val-2, 4-Gln-|-His-5, 13-Glu-|-Ala-14, 14-Ala-|-Leu-15, 15-Leu-|-Tyr-16, 16-Tyr-|-Leu-17, 23-Gly-|-Phe-24, 24-Phe-|-Phe-25 and 25-Phe-|-Tyr-26 bonds in the B chain of insulin.. In terms of biological role, shows particularly broad specificity; although bonds involving phenylalanine and leucine are preferred, many others are also cleaved to some extent. This is Pepsin A (PGA) from Sus scrofa (Pig).